The chain runs to 912 residues: Lateral signaling target protein 2 homolog (912 aa).

Over residues 323 to 332 the composition is skewed to low complexity; the sequence is NVNTSNNSDN. Disordered regions lie at residues 323–360, 455–610, 664–745, and 769–846; these read NVNT…SSFY, ADSG…ESSQ, NSSP…ASSA, and GGGS…APPR. Residues 333–355 are compositionally biased toward basic and acidic residues; that stretch reads SDSRVDDSPNDELRHESETRDNR. The segment covering 455 to 468 has biased composition (polar residues); it reads ADSGLGTANPSVDN. A compositionally biased stretch (acidic residues) spans 486-505; sequence SSEEGEIDEYDNEEDDEDSD. Basic residues predominate over residues 530–544; sequence YRTHKQQHHHRHRRS. Polar residues-rich tracts occupy residues 545-556 and 572-590; these read SGSIMSATSSRK and VPSN…DTSP. A compositionally biased stretch (low complexity) spans 591-610; that stretch reads SSGNQSECSSTSSTTGESSQ. A compositionally biased stretch (basic and acidic residues) spans 682 to 699; that stretch reads DKPKEPDPTDLFEFRASE. 4 stretches are compositionally biased toward polar residues: residues 705–717, 735–745, 780–801, and 822–834; these read PGQN…QSIY, PGTSPIRASSA, ERSV…ATDS, and SRSS…NGTS. The FYVE-type zinc-finger motif lies at 850-910; it reads DGDAPRCMAC…VCRDCYVREV (61 aa). Residues C856, C859, C872, C875, C880, C883, C902, and C905 each contribute to the Zn(2+) site.

This sequence belongs to the lst-2 family.

In terms of biological role, negative regulator of epidermal growth factor receptor (EGFR) signaling. This chain is Lateral signaling target protein 2 homolog, found in Aedes aegypti (Yellowfever mosquito).